A 241-amino-acid polypeptide reads, in one-letter code: Proteasome subunit alpha (241 aa).

It belongs to the peptidase T1A family. As to quaternary structure, the 20S proteasome core is composed of 14 alpha and 14 beta subunits that assemble into four stacked heptameric rings, resulting in a barrel-shaped structure. The two inner rings, each composed of seven catalytic beta subunits, are sandwiched by two outer rings, each composed of seven alpha subunits. The catalytic chamber with the active sites is on the inside of the barrel. Has a gated structure, the ends of the cylinder being occluded by the N-termini of the alpha-subunits. Is capped by the proteasome-associated ATPase, ARC.

Its subcellular location is the cytoplasm. It functions in the pathway protein degradation; proteasomal Pup-dependent pathway. The formation of the proteasomal ATPase ARC-20S proteasome complex, likely via the docking of the C-termini of ARC into the intersubunit pockets in the alpha-rings, may trigger opening of the gate for substrate entry. Interconversion between the open-gate and close-gate conformations leads to a dynamic regulation of the 20S proteasome proteolysis activity. Functionally, component of the proteasome core, a large protease complex with broad specificity involved in protein degradation. This is Proteasome subunit alpha from Frankia alni (strain DSM 45986 / CECT 9034 / ACN14a).